We begin with the raw amino-acid sequence, 1956 residues long: Histone-lysine N-methyltransferase SETD1B (1956 aa).

Positions 1–20 (MSFKEAKPGERGKNPEDHGR) are enriched in basic and acidic residues. The segment at 1–46 (MSFKEAKPGERGKNPEDHGRKQTASWINGMEAGNQPSTSGEKKSHH) is disordered. The RRM domain maps to 111–199 (DEFYVGPVPP…NIIHVELDTK (89 aa)). 9 disordered regions span residues 226–478 (LDAS…LEAE), 502–637 (IAGD…VTPS), 662–696 (GFPPLPPPPPPQPGFPMPPPLPPPPPPTHPSVTVP), 926–1148 (KEPP…DEMQ), 1341–1386 (EDLP…TLTS), 1420–1464 (PTFP…VPSP), 1512–1553 (HLTS…NYET), 1627–1655 (TKHKKSRNSRHNNRYDEFSTVPSPEFSPP), and 1766–1790 (IDTQGKSIPAQPQASTRAGSERRSE). 3 stretches are compositionally biased toward polar residues: residues 254–290 (VTPNSSTPFSHDTAYSSSRQGTPNSYSQFTPQSQGTP), 298–312 (PFSQDSSYSSRQTTP), and 346–361 (SSGSYRGTEHTFNVTR). Pro residues predominate over residues 363-373 (QPEPVQVPRTP). 3 stretches are compositionally biased toward polar residues: residues 375 to 407 (LSHSSGNYKSAFSPYQGNTVFPQTDESQYPQTS), 416 to 432 (GPQTSDSYSDAGCNSAS), and 451 to 464 (DSTTEQKASFSQTP). Residues 517–527 (SPISSSSSQLS) show a composition bias toward low complexity. Composition is skewed to polar residues over residues 535-551 (GSRYQDVTPSSRPSSTG) and 575-593 (SLCQNSRSASPIDQINQSG). A compositionally biased stretch (basic and acidic residues) spans 594 to 605 (RKTESLDKKELV). Acidic residues predominate over residues 625-634 (EDMEISDDEV). Residues 986 to 1000 (SEGEEEVESEGDDGE) show a composition bias toward acidic residues. Positions 1001 to 1011 (TSDKEDSSSEK) are enriched in basic and acidic residues. Positions 1068-1122 (DSSDESEESSEYESSSDSDEKEEEDDEEEELVFGDDQSEDQDLGQEYEVETDREE) are enriched in acidic residues. Basic and acidic residues predominate over residues 1341–1352 (EDLPRTPGRDIV). Polar residues-rich tracts occupy residues 1358–1367 (LGKSQSTETV) and 1450–1462 (EPTSASLTMNSVP). A compositionally biased stretch (basic and acidic residues) spans 1541–1551 (SAHEFETEKNY). The span at 1628–1638 (KHKKSRNSRHN) shows a compositional bias: basic residues. The segment covering 1769 to 1783 (QGKSIPAQPQASTRA) has biased composition (polar residues). The RxxxRR motif motif lies at 1788–1793 (RSEQRR). The SET domain occupies 1817–1934 (KKLRFCKSHI…VNEEITYDYK (118 aa)). S-adenosyl-L-methionine is bound at residue tyrosine 1933. Positions 1940 to 1956 (VKIPCLCGAENCRGTLN) constitute a Post-SET domain.

This sequence belongs to the class V-like SAM-binding methyltransferase superfamily. As to quaternary structure, component of the SET1B/COMPASS complex.

The protein resides in the nucleus speckle. It is found in the chromosome. It catalyses the reaction L-lysyl(4)-[histone H3] + 3 S-adenosyl-L-methionine = N(6),N(6),N(6)-trimethyl-L-lysyl(4)-[histone H3] + 3 S-adenosyl-L-homocysteine + 3 H(+). Histone methyltransferase that specifically methylates 'Lys-4' of histone H3, when part of the SET1 histone methyltransferase (HMT) complex, but not if the neighboring 'Lys-9' residue is already methylated. H3 'Lys-4' methylation represents a specific tag for epigenetic transcriptional activation. The chain is Histone-lysine N-methyltransferase SETD1B (setd1b) from Xenopus tropicalis (Western clawed frog).